The chain runs to 254 residues: Flavin-dependent thymidylate synthase (254 aa).

The region spanning 7–237 (LRVQLIARTE…PAVFADFEIY (231 aa)) is the ThyX domain. FAD is bound by residues Ser-71, 95–97 (RHR), and Gln-103. DUMP-binding positions include 92-95 (ELIR), 103-107 (QLSQR), and Arg-176. A ThyX motif motif is present at residues 95 to 105 (RHRHFSYSQLS). Residues 192-194 (NYR) and His-198 each bind FAD. Arg-203 is a dUMP binding site. The active-site Involved in ionization of N3 of dUMP, leading to its activation is Arg-203.

Belongs to the thymidylate synthase ThyX family. Homotetramer. Requires FAD as cofactor.

It carries out the reaction dUMP + (6R)-5,10-methylene-5,6,7,8-tetrahydrofolate + NADPH + H(+) = dTMP + (6S)-5,6,7,8-tetrahydrofolate + NADP(+). Its pathway is pyrimidine metabolism; dTTP biosynthesis. In terms of biological role, catalyzes the reductive methylation of 2'-deoxyuridine-5'-monophosphate (dUMP) to 2'-deoxythymidine-5'-monophosphate (dTMP) while utilizing 5,10-methylenetetrahydrofolate (mTHF) as the methyl donor, and NADPH and FADH(2) as the reductant. The protein is Flavin-dependent thymidylate synthase of Mycobacterium sp. (strain KMS).